We begin with the raw amino-acid sequence, 153 residues long: 6,7-dimethyl-8-ribityllumazine synthase (153 aa).

5-amino-6-(D-ribitylamino)uracil contacts are provided by residues F22, 56–58 (AFE), and 80–82 (TVI). A (2S)-2-hydroxy-3-oxobutyl phosphate-binding site is contributed by 85–86 (AT). H88 serves as the catalytic Proton donor. 5-amino-6-(D-ribitylamino)uracil is bound at residue F113. R127 lines the (2S)-2-hydroxy-3-oxobutyl phosphate pocket.

The protein belongs to the DMRL synthase family.

The catalysed reaction is (2S)-2-hydroxy-3-oxobutyl phosphate + 5-amino-6-(D-ribitylamino)uracil = 6,7-dimethyl-8-(1-D-ribityl)lumazine + phosphate + 2 H2O + H(+). It functions in the pathway cofactor biosynthesis; riboflavin biosynthesis; riboflavin from 2-hydroxy-3-oxobutyl phosphate and 5-amino-6-(D-ribitylamino)uracil: step 1/2. Functionally, catalyzes the formation of 6,7-dimethyl-8-ribityllumazine by condensation of 5-amino-6-(D-ribitylamino)uracil with 3,4-dihydroxy-2-butanone 4-phosphate. This is the penultimate step in the biosynthesis of riboflavin. The protein is 6,7-dimethyl-8-ribityllumazine synthase of Clostridium perfringens (strain 13 / Type A).